Here is a 393-residue protein sequence, read N- to C-terminus: MTVPTTRKDLMIVNMGPQHPSMHGVLRLIVTLDGEDVIDCEPILGYLHRGMEKIAENRTIIQYLPYVTRWDYLATMFTEAITVNAPEQLGNIQVPKRASYIRVIMLELSRIASHLLWLGPFMADIGAQTPFFYIFRERELIYDLFEAATGMRMMHNYFRIGGVAADLPHGWIDKCLDFCDYFVTGVTEYQKLITRNPIFLERVEGVGFISGEEAINWGLSGPMLRASGIQWDLRKVDHYECYDEFDWEVQWQKEGDSLARYLVRINEMTESIKIIQQALERIPGGPYENLEVRRFDRTRDSEWNDFDYRFISKKPSPTFELSKQELYVRVEAPKGELGIFLIGDQSVFPWRWKIRPPGFINLQILPQLVKRMKLADIMTILGSIDIIMGEVDR.

The protein belongs to the complex I 49 kDa subunit family. As to quaternary structure, NDH is composed of at least 16 different subunits, 5 of which are encoded in the nucleus.

The protein localises to the plastid. It is found in the chloroplast thylakoid membrane. The catalysed reaction is a plastoquinone + NADH + (n+1) H(+)(in) = a plastoquinol + NAD(+) + n H(+)(out). The enzyme catalyses a plastoquinone + NADPH + (n+1) H(+)(in) = a plastoquinol + NADP(+) + n H(+)(out). In terms of biological role, NDH shuttles electrons from NAD(P)H:plastoquinone, via FMN and iron-sulfur (Fe-S) centers, to quinones in the photosynthetic chain and possibly in a chloroplast respiratory chain. The immediate electron acceptor for the enzyme in this species is believed to be plastoquinone. Couples the redox reaction to proton translocation, and thus conserves the redox energy in a proton gradient. The polypeptide is NAD(P)H-quinone oxidoreductase subunit H, chloroplastic (Nandina domestica (Heavenly bamboo)).